The primary structure comprises 95 residues: MNIRPLHDRVIVKRLEEETKSAGGIVLTGSAAEKSTRGEVVAVGNGRILESGDVRALEVKAGDTVLFGSYVEKVEKIEGQEYLIMREDNILGIVG.

It belongs to the GroES chaperonin family. In terms of assembly, heptamer of 7 subunits arranged in a ring. Interacts with the chaperonin GroEL.

The protein localises to the cytoplasm. In terms of biological role, together with the chaperonin GroEL, plays an essential role in assisting protein folding. The GroEL-GroES system forms a nano-cage that allows encapsulation of the non-native substrate proteins and provides a physical environment optimized to promote and accelerate protein folding. GroES binds to the apical surface of the GroEL ring, thereby capping the opening of the GroEL channel. In Pseudoalteromonas translucida (strain TAC 125), this protein is Co-chaperonin GroES.